We begin with the raw amino-acid sequence, 124 residues long: Small ribosomal subunit protein uS12 (124 aa).

Asp89 carries the 3-methylthioaspartic acid modification.

This sequence belongs to the universal ribosomal protein uS12 family. As to quaternary structure, part of the 30S ribosomal subunit. Contacts proteins S8 and S17. May interact with IF1 in the 30S initiation complex.

Its function is as follows. With S4 and S5 plays an important role in translational accuracy. Interacts with and stabilizes bases of the 16S rRNA that are involved in tRNA selection in the A site and with the mRNA backbone. Located at the interface of the 30S and 50S subunits, it traverses the body of the 30S subunit contacting proteins on the other side and probably holding the rRNA structure together. The combined cluster of proteins S8, S12 and S17 appears to hold together the shoulder and platform of the 30S subunit. The sequence is that of Small ribosomal subunit protein uS12 from Shewanella sediminis (strain HAW-EB3).